The following is a 1605-amino-acid chain: Kinesin-like protein klp-12 (1605 aa).

One can recognise a Kinesin motor domain in the interval Cys-5–Ile-358. Gly-84 to Thr-91 contacts ATP. Thr-91 and Ser-217 together coordinate Mg(2+). Disordered stretches follow at residues Gly-548 to Glu-596, Val-1085 to Asn-1152, and Ser-1198 to Lys-1232. Over residues Asn-550–Ala-559 the composition is skewed to polar residues. The segment covering Gln-560–Glu-596 has biased composition (acidic residues). A coiled-coil region spans residues Glu-575–Lys-730. The segment covering Val-1116 to Asn-1152 has biased composition (polar residues). A compositionally biased stretch (low complexity) spans Ser-1200–Lys-1232. WD repeat units follow at residues Gly-1282 to Thr-1319, Phe-1389 to Arg-1427, Ala-1525 to Leu-1566, and Ala-1573 to Val-1605.

It belongs to the TRAFAC class myosin-kinesin ATPase superfamily. Kinesin family. In terms of assembly, component of a complex at least composed of alpha tubulin and beta tubulin. Within the complex, interacts with the alpha tubulin and beta tubulin dimer.

The protein localises to the cytoplasm. Its subcellular location is the cytoskeleton. Its function is as follows. Microtubule-binding motor protein which has ATPase activity. In complex with alpha and beta tubulins, preferentially binds to the growing microtubule plus-end to stabilize it and detaches following ATP hydrolysis. Negatively regulates axonal length through inhibiting microtubule polymerization at its plus-end. In Caenorhabditis elegans, this protein is Kinesin-like protein klp-12.